Here is a 490-residue protein sequence, read N- to C-terminus: NAI2-like protein (490 aa).

Positions 1–24 (MGRKYVVLGLAVCLFLSSFNEVSC) are cleaved as a signal peptide. Disordered regions lie at residues 43–83 (EEGE…VDKF) and 155–206 (AATN…FNKG). A coiled-coil region spans residues 136 to 163 (IADERRQRLEDIERKLKAAAATNIVVED). A compositionally biased stretch (basic and acidic residues) spans 171–183 (KVEETQEVVKFES). Over residues 184–199 (ESSSASSESRRQSSSS) the composition is skewed to low complexity. A coiled-coil region spans residues 433-465 (TFEKTVANLSRVIEEASQAYEEYHVVVRKWKEE).

This is NAI2-like protein from Arabidopsis thaliana (Mouse-ear cress).